The following is a 297-amino-acid chain: MIPLRVRVPASTANVGPGFDSVGIALSLYLEVSVKEEADKWQVIHSFDDSIPKDDKNLIVSTACKVCPSLSPHIIEVTSNIPLTRGLGSSASAIVAGIELANQLGNLYLTTDQKVQIATNFEGHPDNVAASILGGTVIGALDGKNVSVVRIESKELGVISLIPNEELNTDESRSVLPEMFPFHEAVKASAISNVLVAALCQKKWEVVGEMMERDHFHEPYRLELVPLLPSIRKCAKEFGAYGTALSGAGPSIFILTPYEKRKEIADQLARVFAAMKVCELEIDHKGITVNKEEHIGL.

82–92 (PLTRGLGSSAS) is an ATP binding site.

This sequence belongs to the GHMP kinase family. Homoserine kinase subfamily.

Its subcellular location is the cytoplasm. It carries out the reaction L-homoserine + ATP = O-phospho-L-homoserine + ADP + H(+). It participates in amino-acid biosynthesis; L-threonine biosynthesis; L-threonine from L-aspartate: step 4/5. In terms of biological role, catalyzes the ATP-dependent phosphorylation of L-homoserine to L-homoserine phosphate. The chain is Homoserine kinase from Bacillus mycoides (strain KBAB4) (Bacillus weihenstephanensis).